Reading from the N-terminus, the 376-residue chain is Immunoglobulin G-binding protein H (376 aa).

The N-terminal stretch at Met1–Ala41 is a signal peptide. Residues Thr69–His271 form a disordered region. 4 stretches are compositionally biased toward basic and acidic residues: residues Glu72 to Gln146, Glu156 to Ile203, Leu211 to Ile245, and Leu253 to His271. 3 C repeats span residues Gln153 to His187, Gln195 to His229, and Gln237 to His271. D repeat units follow at residues Gln272–Glu277, Ala278–Glu283, Ala286–Glu291, and Ala293–Gly298. The tract at residues Leu292 to Thr348 is disordered. An LPXTG sorting signal motif is present at residues Leu342–Gly346. Residue Thr345 is modified to Pentaglycyl murein peptidoglycan amidated threonine. A propeptide spans Gly346 to Asn376 (removed by sortase).

This sequence belongs to the M protein family.

It localises to the secreted. The protein resides in the cell wall. The sequence is that of Immunoglobulin G-binding protein H from Streptococcus pyogenes serotype M1.